The chain runs to 217 residues: Heart- and neural crest derivatives-expressed protein 2 (217 aa).

The disordered stretch occupies residues 76 to 116; sequence DHSHYGGVPPGAGPPGLGGPRPVKRRGTANRKERRRTQSIN. The span at 83 to 94 shows a compositional bias: gly residues; the sequence is VPPGAGPPGLGG. The span at 97 to 112 shows a compositional bias: basic residues; sequence PVKRRGTANRKERRRT. The bHLH domain occupies 99–151; that stretch reads KRRGTANRKERRRTQSINSAFAELRECIPNVPADTKLSKIKTLRLATSYIAYL.

Efficient DNA binding requires dimerization with another bHLH protein. Forms homodimers and heterodimers with TCF3 gene products E12 and E47, HAND1 and HEY1, HEY2 and HEYL (hairy-related transcription factors).

It localises to the nucleus. Its function is as follows. Essential for cardiac morphogenesis, particularly for the formation of the right ventricle and of the aortic arch arteries. Required for vascular development and regulation of angiogenesis, possibly through a VEGF signaling pathway. Also plays an important role in limb development, particularly in the establishment of anterior-posterior polarization, acting as an upstream regulator of sonic hedgehog (SHH) induction in the limb bud. Is involved in the development of branchial arches, which give rise to unique structures in the head and neck. Binds DNA on E-box consensus sequence 5'-CANNTG-3'. The chain is Heart- and neural crest derivatives-expressed protein 2 (Hand2) from Rattus norvegicus (Rat).